Consider the following 137-residue polypeptide: Nucleoside diphosphate kinase (137 aa).

6 residues coordinate ATP: lysine 9, phenylalanine 57, arginine 85, threonine 91, arginine 102, and asparagine 112. Histidine 115 serves as the catalytic Pros-phosphohistidine intermediate.

Belongs to the NDK family. As to quaternary structure, homotetramer. It depends on Mg(2+) as a cofactor.

The protein localises to the cytoplasm. The enzyme catalyses a 2'-deoxyribonucleoside 5'-diphosphate + ATP = a 2'-deoxyribonucleoside 5'-triphosphate + ADP. It carries out the reaction a ribonucleoside 5'-diphosphate + ATP = a ribonucleoside 5'-triphosphate + ADP. Major role in the synthesis of nucleoside triphosphates other than ATP. The ATP gamma phosphate is transferred to the NDP beta phosphate via a ping-pong mechanism, using a phosphorylated active-site intermediate. The chain is Nucleoside diphosphate kinase from Campylobacter jejuni subsp. jejuni serotype O:6 (strain 81116 / NCTC 11828).